The sequence spans 197 residues: Large ribosomal subunit protein bL17 (197 aa).

Residues 136-197 are disordered; sequence RAAKKADAPQ…DAEKSSDTEK (62 aa). The span at 148–187 shows a compositional bias: acidic residues; it reads VADEATDADESVEDEAPAQDDSADEVEAAADETPADDAEA. Residues 188 to 197 show a composition bias toward basic and acidic residues; that stretch reads DAEKSSDTEK.

It belongs to the bacterial ribosomal protein bL17 family. Part of the 50S ribosomal subunit. Contacts protein L32.

The protein is Large ribosomal subunit protein bL17 of Beutenbergia cavernae (strain ATCC BAA-8 / DSM 12333 / CCUG 43141 / JCM 11478 / NBRC 16432 / NCIMB 13614 / HKI 0122).